The following is an 892-amino-acid chain: Dystroglycan 1 (892 aa).

The signal sequence occupies residues 1–27 (MRMSAGLSLLLPLWGRTFLLLLSVAMA). Residues 28–750 (QSHWPSEAGR…SSEDDVYLHT (723 aa)) lie on the Extracellular side of the membrane. Residues 30–405 (HWPSEAGRDW…GQIRPTMTIP (376 aa)) are required for laminin recognition. Residues 46-68 (SMHSVLSDLHEAVPTVVGIPDGI) are O-glycosylated at one site. N-linked (GlcNAc...) asparagine glycosylation is present at Asn-138. The cysteines at positions 179 and 261 are disulfide-linked. The interval 313–482 (ATPTPVTAIG…PPTRIRTTTS (170 aa)) is mucin-like domain. 3 O-linked (Man6P...) threonine glycosylation sites follow: Thr-314, Thr-316, and Thr-376. A disordered region spans residues 378–497 (TLGPIQPTRV…GEPNQRPELK (120 aa)). Residues 410 to 444 (PTAVATPPTTTTKKPRVSTPKPATPSTDSSTTTTR) show a composition bias toward low complexity. The O-glycosylated at seven sites with GalNAc stretch occupies residues 460–482 (TTKAPITRLETASPPTRIRTTTS). The Peptidase S72 domain occupies 600–709 (RAPARFKAKF…SSIAVTGSGS (110 aa)). N-linked (GlcNAc...) asparagine glycosylation is found at Asn-638, Asn-646, and Asn-658. Residues Cys-666 and Cys-710 are joined by a disulfide bond. The disordered stretch occupies residues 721-742 (PRRVPSEVPSTDVPDRDPEKSS). The span at 733–742 (VPDRDPEKSS) shows a compositional bias: basic and acidic residues. Residues 751-771 (VIPAVVVAAILLIAGIIAMIC) form a helical membrane-spanning segment. Residues 772–892 (YRKKRKGKLT…YRSPPPYVPP (121 aa)) are Cytoplasmic-facing. Residues 773–779 (RKKRKGK) carry the Nuclear localization signal motif. Thr-787 carries the post-translational modification Phosphothreonine. Positions 816 to 892 (LQEEKAPLPP…YRSPPPYVPP (77 aa)) are required for interaction with CAV3. The disordered stretch occupies residues 820–892 (KAPLPPPEYP…YRSPPPYVPP (73 aa)). Positions 829-843 (PNQSVPETTPLNQDT) are enriched in polar residues. The span at 856-867 (NAPPYQPPPPFT) shows a compositional bias: pro residues. The required for binding DMD and UTRN stretch occupies residues 877–892 (PKNMTPYRSPPPYVPP). A PPXY motif motif is present at residues 886–889 (PPPY). Phosphotyrosine; by SRC is present on Tyr-889.

As to quaternary structure, monomer. Heterodimer of alpha- and beta-dystroglycan subunits which are the central components of the dystrophin-glycoprotein complex. This complex then can form a dystrophin-associated glycoprotein complex (DGC) which is composed of three subcomplexes: a cytoplasmic complex comprised of DMD (or UTRN), DTNA and a number of syntrophins, such as SNTB1, SNTB2, SNTG1 and SNTG2, the transmembrane dystroglycan complex, and the sarcoglycan-sarcospan complex. Interacts (via the N-terminal of alphaDAG1) with LARGE1; the interaction enhances laminin binding. Interacts with SGCD. Interacts with AGR2 and AGR3. Interacts (betaDAG1) with DMD; the interaction is inhibited by phosphorylation on the PPXY motif. Interacts (betaDAG1, via its PPXY motif) with UTRN (via its WWW and ZZ domains); the interaction is inhibited by phosphorylation on the PPXY motif. Interacts (betaDAG1, via its phosphorylated PPXY motif) with the SH2 domain-containing proteins, FYN, CSK, NCK and SHC. Interacts (betaDAG1) with CAV3 (via a central WW-like domain); the interaction disrupts the binding of DMD. BetaDAG1 directly interacts with ANK3, but not with ANK2; this interaction does not interfere with DMD-binding and is required for retention at costameres. Identified in a dystroglycan complex that contains at least PRX, DRP2, UTRN, DMD and DAG1. Interacts with POMGNT1. BetaDAG1 interacts with CD93. In terms of processing, O-glycosylated. POMGNT1 catalyzes the initial addition of N-acetylglucosamine, giving rise to the GlcNAc(beta1-2)Man(alpha1-)O-Ser/Thr moiety and thus providing the necessary basis for the addition of further carbohydrate moieties. Heavily O-glycosylated comprising of up to two thirds of its mass and the carbohydrate composition differs depending on tissue type. Mucin-type O-glycosylation is important for ligand binding activity. O-mannosylation is found in high abundance in both brain and muscle where the most abundant glycan is Sia-alpha-2-3-Gal-beta-1-4-Glc-NAc-beta-1-2-Man. In muscle, glycosylation on Thr-314, Thr-316 and Thr-376 by a phosphorylated O-mannosyl glycan with the structure 2-(N-acetylamido)-2-deoxygalactosyl-beta-1,3-2-(N-acetylamido)-2-deoxyglucosyl-beta-1,4-6-phosphomannose is mediated by like-acetylglucosaminyltransferase (LARGE1) protein amd is required for laminin binding. O-glycosylated in the N-terminal region with a core 1 or possibly core 8 glycan. The brain form displays a unique glycosylation pattern which is absent in other tissues; this form shows enhanced binding to laminin LAMA5 compared to the skeletal muscle form. Post-translationally, N-glycosylated. Autolytic cleavage produces the alpha and beta subunits. In cutaneous cells, as well as in certain pathological conditions, shedding of beta-dystroglycan can occur releasing a peptide of about 30 kDa. In terms of processing, SRC-mediated phosphorylation of the PPXY motif of the beta subunit recruits SH2 domain-containing proteins, but inhibits binding to WWW domain-containing proteins, DMD and UTRN. This phosphorylation also inhibits nuclear entry.

It localises to the secreted. The protein localises to the extracellular space. Its subcellular location is the cell membrane. The protein resides in the cytoplasm. It is found in the cytoskeleton. It localises to the nucleus. The protein localises to the nucleoplasm. Its subcellular location is the sarcolemma. The protein resides in the postsynaptic cell membrane. In terms of biological role, the dystroglycan complex is involved in a number of processes including laminin and basement membrane assembly, sarcolemmal stability, cell survival, peripheral nerve myelination, nodal structure, cell migration, and epithelial polarization. Its function is as follows. Extracellular peripheral glycoprotein that acts as a receptor for extracellular matrix proteins containing laminin-G domains. Receptor for laminin-2 (LAMA2) and agrin in peripheral nerve Schwann cells. Also acts as a receptor for laminin LAMA5. Transmembrane protein that plays important roles in connecting the extracellular matrix to the cytoskeleton. Acts as a cell adhesion receptor in both muscle and non-muscle tissues. Receptor for both DMD and UTRN and, through these interactions, scaffolds axin to the cytoskeleton. Also functions in cell adhesion-mediated signaling and implicated in cell polarity. The chain is Dystroglycan 1 from Canis lupus familiaris (Dog).